The primary structure comprises 340 residues: 4-dimethylallyltryptophan N-methyltransferase ifgB (340 aa).

Belongs to the methyltransferase superfamily. As to quaternary structure, homodimer.

The catalysed reaction is 4-(3-methylbut-2-enyl)-L-tryptophan + S-adenosyl-L-methionine = 4-(3-methylbut-2-enyl)-L-abrine + S-adenosyl-L-homocysteine + H(+). It participates in alkaloid biosynthesis; ergot alkaloid biosynthesis. Functionally, 4-dimethylallyltryptophan N-methyltransferase; part of the gene cluster that mediates the biosynthesis of isofumigaclavines, fungal ergot alkaloids. The tryptophan dimethylallyltransferase ifgA catalyzes the first step of ergot alkaloid biosynthesis by condensing dimethylallyl diphosphate (DMAP) and tryptophan to form 4-dimethylallyl-L-tryptophan. The second step is catalyzed by the methyltransferase ifgB that methylates 4-dimethylallyl-L-tryptophan in the presence of S-adenosyl-L-methionine, resulting in the formation of N-methyl-dimethylallyl-L-tryptophan. The catalase ifgD and the FAD-dependent oxidoreductase ifgC then transform N-methyl-dimethylallyl-L-tryptophan to chanoclavine-I which is further oxidized by ifgE in the presence of NAD(+), resulting in the formation of chanoclavine-I aldehyde. The chanoclavine-I aldehyde reductases ifgG and/or fgaOx3 reduce chanoclavine-I aldehyde to dihydrochanoclavine-I aldehyde that spontaneously dehydrates to form 6,8-dimethyl-6,7-didehydroergoline. The festuclavine dehydrogenases ifgF1 and/or ifgF2 then catalyze the reduction of 6,8-dimethyl-6,7-didehydroergoline to form festuclavine. Hydrolysis of festuclavine by a yet undetermined cytochrome P450 monooxygenase (called ifgH) then leads to the formation of isofumigaclavine B which is in turn acetylated by ifgI to isofumigaclavine A. Penicillium roqueforti has interestingly at least two sets of genes for the consumption of chanoclavine-I aldehyde on three different loci, the OYEs ifgG/fgaOx3 and the festuclavine synthase homologs ifgF1/ifgF2. The reason for the duplication of these genes is unclear, probably to ensure the conversion of chanoclavine-I aldehyde by differential gene expression under various environmental conditions. The chain is 4-dimethylallyltryptophan N-methyltransferase ifgB from Penicillium roqueforti (strain FM164).